Here is a 255-residue protein sequence, read N- to C-terminus: Hydroxyacylglutathione hydrolase (255 aa).

Zn(2+)-binding residues include His52, His54, Asp56, His57, His109, Asp126, and His166.

It belongs to the metallo-beta-lactamase superfamily. Glyoxalase II family. Monomer. Zn(2+) is required as a cofactor.

It carries out the reaction an S-(2-hydroxyacyl)glutathione + H2O = a 2-hydroxy carboxylate + glutathione + H(+). It functions in the pathway secondary metabolite metabolism; methylglyoxal degradation; (R)-lactate from methylglyoxal: step 2/2. Its function is as follows. Thiolesterase that catalyzes the hydrolysis of S-D-lactoyl-glutathione to form glutathione and D-lactic acid. In Anaeromyxobacter dehalogenans (strain 2CP-C), this protein is Hydroxyacylglutathione hydrolase.